Here is a 406-residue protein sequence, read N- to C-terminus: Tryptophan synthase beta chain (406 aa).

The residue at position 97 (Lys-97) is an N6-(pyridoxal phosphate)lysine.

This sequence belongs to the TrpB family. As to quaternary structure, tetramer of two alpha and two beta chains. The cofactor is pyridoxal 5'-phosphate.

It carries out the reaction (1S,2R)-1-C-(indol-3-yl)glycerol 3-phosphate + L-serine = D-glyceraldehyde 3-phosphate + L-tryptophan + H2O. It participates in amino-acid biosynthesis; L-tryptophan biosynthesis; L-tryptophan from chorismate: step 5/5. The beta subunit is responsible for the synthesis of L-tryptophan from indole and L-serine. The protein is Tryptophan synthase beta chain of Lacticaseibacillus casei (strain BL23) (Lactobacillus casei).